The sequence spans 431 residues: MCNNNNTSCVNISSMLQPEDIFSRRCIWVNGPVIVGAGPSGLAVAADLKRQEVPFVILERANCIASLWQNRTYDRLKLHLPKQFCQLPNLPFPEDIPEYPTKYQFIEYLESYATHFDLRPKFNETVQSAKYDKRFGLWRVQTVLRSELLGYCEFEYICRWLVVATGENAEKVVPEFEGLEDFGGDVLHAGDYKSGERYRGKRVLVVGCGNSGMEVSLDLCNHDASPSMVVRSSVHVLPREVLGKSTFELSVTMMKWMPVWLVDKTLLVLTRLLLGNTDKYGLKRPEIGPLELKNTAGKTPVLDIGAISMIKSGKIKIVAGIAKFGPGKVELVDGRVLQIDSVILATGYRSNVPSWLKENDLGEIGIEKNPFPKGWKGKAGLYAVGFTGRGLSGASFDAMSVAHDIANSWKEETKQQIKTVATRHRRCISHF.

Position 36-41 (36-41 (GAGPSG)) interacts with FAD. Residue 207–212 (GCGNSG) coordinates NADP(+).

This sequence belongs to the FMO family. FAD is required as a cofactor. In terms of tissue distribution, expressed in shoot apex regions and siliques, and at high levels in roots. Detected in flowers, stems and leaves.

It carries out the reaction indole-3-pyruvate + NADPH + O2 + H(+) = (indol-3-yl)acetate + CO2 + NADP(+) + H2O. The protein operates within plant hormone metabolism; auxin biosynthesis. In terms of biological role, involved in auxin biosynthesis. Belongs to the set of redundant YUCCA genes probably responsible for auxin biosynthesis in roots. This chain is Probable indole-3-pyruvate monooxygenase YUCCA7 (YUC7), found in Arabidopsis thaliana (Mouse-ear cress).